Reading from the N-terminus, the 279-residue chain is Urease accessory protein UreD (279 aa).

It belongs to the UreD family. UreD, UreF and UreG form a complex that acts as a GTP-hydrolysis-dependent molecular chaperone, activating the urease apoprotein by helping to assemble the nickel containing metallocenter of UreC. The UreE protein probably delivers the nickel.

It localises to the cytoplasm. Functionally, required for maturation of urease via the functional incorporation of the urease nickel metallocenter. This chain is Urease accessory protein UreD, found in Nostoc punctiforme (strain ATCC 29133 / PCC 73102).